The sequence spans 1478 residues: GTPase-activating protein and VPS9 domain-containing protein 1 (1478 aa).

Residues serine 147–glycine 385 enclose the Ras-GAP domain. Serine 227 is modified (phosphoserine). Phosphothreonine is present on residues threonine 390 and threonine 458. Tyrosine 460 carries the phosphotyrosine modification. Serine 466 carries the phosphoserine modification. Threonine 470 is subject to Phosphothreonine. A phosphoserine mark is found at serine 566 and serine 569. Disordered regions lie at residues glycine 574 to glycine 608, glutamate 739 to glutamine 820, and histidine 846 to phenylalanine 874. Residues glycine 578–serine 588 show a composition bias toward polar residues. Serine 742, serine 746, and serine 757 each carry phosphoserine. Residues serine 758 to aspartate 777 show a composition bias toward polar residues. Threonine 762 is modified (phosphothreonine). Serine 766 is subject to Phosphoserine. Over residues isoleucine 778–cysteine 789 the composition is skewed to basic and acidic residues. A phosphoserine mark is found at serine 876, serine 902, serine 903, serine 908, serine 914, and serine 966. Positions glutamine 889–serine 902 are enriched in basic and acidic residues. Disordered stretches follow at residues glutamine 889–serine 1023 and threonine 1043–leucine 1064. Composition is skewed to basic and acidic residues over residues aspartate 954 to arginine 975 and glutamate 997 to proline 1008. Residues serine 1012 to serine 1023 show a composition bias toward polar residues. A phosphoserine mark is found at serine 1019, serine 1046, serine 1096, and serine 1103. Residues isoleucine 1338–lysine 1478 enclose the VPS9 domain.

Belongs to the GAPVD1 family. Interacts with TRIP10/CIP4. Interacts with RAB5A. As to quaternary structure, (Microbial infection) Interacts with P.falciparum (strain 3D7) CK1. In terms of tissue distribution, expressed in erythrocytes (at protein level).

The protein localises to the membrane. The protein resides in the endosome. Functionally, acts both as a GTPase-activating protein (GAP) and a guanine nucleotide exchange factor (GEF), and participates in various processes such as endocytosis, insulin receptor internalization or LC2A4/GLUT4 trafficking. Acts as a GEF for the Ras-related protein RAB31 by exchanging bound GDP for free GTP, leading to regulate LC2A4/GLUT4 trafficking. In the absence of insulin, it maintains RAB31 in an active state and promotes a futile cycle between LC2A4/GLUT4 storage vesicles and early endosomes, retaining LC2A4/GLUT4 inside the cells. Upon insulin stimulation, it is translocated to the plasma membrane, releasing LC2A4/GLUT4 from intracellular storage vesicles. Also involved in EGFR trafficking and degradation, possibly by promoting EGFR ubiquitination and subsequent degradation by the proteasome. Has GEF activity for Rab5 and GAP activity for Ras. This Homo sapiens (Human) protein is GTPase-activating protein and VPS9 domain-containing protein 1 (GAPVD1).